A 235-amino-acid polypeptide reads, in one-letter code: High mobility group protein 1.2 (235 aa).

A compositionally biased stretch (polar residues) spans 1 to 34; that stretch reads MNSGYSANIFPSSSSPTLYQSHQLQPNPSATMYQ. The interval 1 to 47 is disordered; the sequence is MNSGYSANIFPSSSSPTLYQSHQLQPNPSATMYQATPRDMGKPPVRG. 2 DNA-binding regions (HMG box) span residues 47–117 and 135–203; these read GKTS…AAYG and PKRA…RNYK.

This sequence belongs to the HMGB family.

It localises to the nucleus. In Caenorhabditis elegans, this protein is High mobility group protein 1.2 (hmg-1.2).